The primary structure comprises 237 residues: Ribonuclease 3 (237 aa).

The RNase III domain maps to 4–133 (LTELEKSLGV…VLAAIYLDKG (130 aa)). E46 lines the Mg(2+) pocket. Residues D50 and E122 contribute to the active site. E122 contacts Mg(2+). Positions 160-229 (DYKSRLQELV…AKEALQQFEN (70 aa)) constitute a DRBM domain.

This sequence belongs to the ribonuclease III family. In terms of assembly, homodimer. Requires Mg(2+) as cofactor.

Its subcellular location is the cytoplasm. It carries out the reaction Endonucleolytic cleavage to 5'-phosphomonoester.. Its function is as follows. Digests double-stranded RNA. Involved in the processing of primary rRNA transcript to yield the immediate precursors to the large and small rRNAs (23S and 16S). Processes some mRNAs, and tRNAs when they are encoded in the rRNA operon. Processes pre-crRNA and tracrRNA of type II CRISPR loci if present in the organism. The protein is Ribonuclease 3 of Dehalococcoides mccartyi (strain ATCC BAA-2266 / KCTC 15142 / 195) (Dehalococcoides ethenogenes (strain 195)).